A 239-amino-acid polypeptide reads, in one-letter code: Ribosomal RNA small subunit methyltransferase A (239 aa).

Asparagine 23, isoleucine 25, glycine 50, glutamate 72, aspartate 97, and asparagine 116 together coordinate S-adenosyl-L-methionine.

The protein belongs to the class I-like SAM-binding methyltransferase superfamily. rRNA adenine N(6)-methyltransferase family. RsmA subfamily.

It is found in the cytoplasm. It catalyses the reaction adenosine(1518)/adenosine(1519) in 16S rRNA + 4 S-adenosyl-L-methionine = N(6)-dimethyladenosine(1518)/N(6)-dimethyladenosine(1519) in 16S rRNA + 4 S-adenosyl-L-homocysteine + 4 H(+). Its function is as follows. Specifically dimethylates two adjacent adenosines (A1518 and A1519) in the loop of a conserved hairpin near the 3'-end of 16S rRNA in the 30S particle. May play a critical role in biogenesis of 30S subunits. The sequence is that of Ribosomal RNA small subunit methyltransferase A from Rickettsia felis (strain ATCC VR-1525 / URRWXCal2) (Rickettsia azadi).